The following is a 119-amino-acid chain: Putative transmembrane protein ORF119 (119 aa).

Helical transmembrane passes span 9-29 (TLAI…PAMV), 73-93 (QYAG…SIFT), and 95-115 (PIAL…AFYY).

Its subcellular location is the host membrane. The sequence is that of Putative transmembrane protein ORF119 from Acidianus convivator (ATV).